A 227-amino-acid chain; its full sequence is Cytochrome c oxidase subunit 2 (227 aa).

Residues 1-14 are Mitochondrial intermembrane-facing; the sequence is MAYPMQLGFQDATS. Residues 15-45 form a helical membrane-spanning segment; it reads PIMEELLHFHDHTLMIVFLISSLVLYIISLM. Residues 46-59 are Mitochondrial matrix-facing; sequence LTTKLTHTSTMDAQ. The chain crosses the membrane as a helical span at residues 60 to 87; that stretch reads EVETIWTILPAIILILIALPSLRILYMM. At 88 to 227 the chain is on the mitochondrial intermembrane side; it reads DEINNPSLTV…YFEKWSASML (140 aa). Cu cation-binding residues include His-161, Cys-196, Glu-198, Cys-200, His-204, and Met-207. Glu-198 is a Mg(2+) binding site. At Tyr-218 the chain carries Phosphotyrosine.

Belongs to the cytochrome c oxidase subunit 2 family. Component of the cytochrome c oxidase (complex IV, CIV), a multisubunit enzyme composed of 14 subunits. The complex is composed of a catalytic core of 3 subunits MT-CO1, MT-CO2 and MT-CO3, encoded in the mitochondrial DNA, and 11 supernumerary subunits COX4I, COX5A, COX5B, COX6A, COX6B, COX6C, COX7A, COX7B, COX7C, COX8 and NDUFA4, which are encoded in the nuclear genome. The complex exists as a monomer or a dimer and forms supercomplexes (SCs) in the inner mitochondrial membrane with NADH-ubiquinone oxidoreductase (complex I, CI) and ubiquinol-cytochrome c oxidoreductase (cytochrome b-c1 complex, complex III, CIII), resulting in different assemblies (supercomplex SCI(1)III(2)IV(1) and megacomplex MCI(2)III(2)IV(2)). Found in a complex with TMEM177, COA6, COX18, COX20, SCO1 and SCO2. Interacts with TMEM177 in a COX20-dependent manner. Interacts with COX20. Interacts with COX16. Cu cation serves as cofactor.

It localises to the mitochondrion inner membrane. It carries out the reaction 4 Fe(II)-[cytochrome c] + O2 + 8 H(+)(in) = 4 Fe(III)-[cytochrome c] + 2 H2O + 4 H(+)(out). Component of the cytochrome c oxidase, the last enzyme in the mitochondrial electron transport chain which drives oxidative phosphorylation. The respiratory chain contains 3 multisubunit complexes succinate dehydrogenase (complex II, CII), ubiquinol-cytochrome c oxidoreductase (cytochrome b-c1 complex, complex III, CIII) and cytochrome c oxidase (complex IV, CIV), that cooperate to transfer electrons derived from NADH and succinate to molecular oxygen, creating an electrochemical gradient over the inner membrane that drives transmembrane transport and the ATP synthase. Cytochrome c oxidase is the component of the respiratory chain that catalyzes the reduction of oxygen to water. Electrons originating from reduced cytochrome c in the intermembrane space (IMS) are transferred via the dinuclear copper A center (CU(A)) of subunit 2 and heme A of subunit 1 to the active site in subunit 1, a binuclear center (BNC) formed by heme A3 and copper B (CU(B)). The BNC reduces molecular oxygen to 2 water molecules using 4 electrons from cytochrome c in the IMS and 4 protons from the mitochondrial matrix. The sequence is that of Cytochrome c oxidase subunit 2 (MT-CO2) from Syncerus caffer (African buffalo).